Consider the following 741-residue polypeptide: Phage T7 exclusion protein (741 aa).

The 308-residue stretch at 27-334 (FGNIAENISR…NSLIFLYPGM (308 aa)) folds into the KAP NTPase domain.

Its function is as follows. Responsible for the exclusion of phage T7 by plasmid F. Growth of bacteriophage T7 is inhibited in cells of E.coli that carries the plasmid F. The protein is Phage T7 exclusion protein (pifA) of Escherichia coli (strain K12).